The sequence spans 134 residues: ATP synthase epsilon chain (134 aa).

Residues 100–134 (NQKLQNENLSEEEKEHYEKQRSRSQALLNLASAKV) are disordered. Residues 110–120 (EEEKEHYEKQR) show a composition bias toward basic and acidic residues.

Belongs to the ATPase epsilon chain family. F-type ATPases have 2 components, CF(1) - the catalytic core - and CF(0) - the membrane proton channel. CF(1) has five subunits: alpha(3), beta(3), gamma(1), delta(1), epsilon(1). CF(0) has three main subunits: a, b and c.

The protein localises to the cell inner membrane. In terms of biological role, produces ATP from ADP in the presence of a proton gradient across the membrane. This Sulfurihydrogenibium sp. (strain YO3AOP1) protein is ATP synthase epsilon chain.